Here is a 584-residue protein sequence, read N- to C-terminus: Adenine deaminase (584 aa).

The protein belongs to the metallo-dependent hydrolases superfamily. Adenine deaminase family. It depends on Mn(2+) as a cofactor.

It catalyses the reaction adenine + H2O + H(+) = hypoxanthine + NH4(+). The sequence is that of Adenine deaminase from Methanococcoides burtonii (strain DSM 6242 / NBRC 107633 / OCM 468 / ACE-M).